Consider the following 243-residue polypeptide: R-spondin-2 (243 aa).

Positions 1-23 are cleaved as a signal peptide; sequence MRFCLFSFALIILNCMDYSQCQG. Disulfide bonds link Cys-40-Cys-46, Cys-43-Cys-52, Cys-55-Cys-74, Cys-78-Cys-93, Cys-96-Cys-104, Cys-101-Cys-110, Cys-113-Cys-124, Cys-128-Cys-141, Cys-145-Cys-187, Cys-156-Cys-163, and Cys-196-Cys-203. Residues 90–134 form an FU repeat; that stretch reads MNRCARCRIENCDSCFSKDFCTKCKVGFYLHRGRCFDECPDGFAP. The region spanning 144-204 is the TSP type-1 domain; the sequence is GCEVGHWSEW…RCKMAMRHCP (61 aa). A glycan (N-linked (GlcNAc...) asparagine) is linked at Asn-160. A compositionally biased stretch (basic residues) spans 204-224; that stretch reads PGGKRTPKAKEKRNKKKRRKL. Positions 204 to 243 are disordered; sequence PGGKRTPKAKEKRNKKKRRKLIERAQEQHSVFLATDRVNQ.

The protein belongs to the R-spondin family. Interacts with WNT1. Binds heparin. Interacts with LGR4, LGR5 and LGR6.

The protein localises to the secreted. Functionally, activator of the canonical Wnt signaling pathway by acting as a ligand for LGR4-6 receptors. Upon binding to LGR4-6 (LGR4, LGR5 or LGR6), LGR4-6 associate with phosphorylated LRP6 and frizzled receptors that are activated by extracellular Wnt receptors, triggering the canonical Wnt signaling pathway to increase expression of target genes. Also regulates the canonical Wnt/beta-catenin-dependent pathway and non-canonical Wnt signaling by acting as an inhibitor of ZNRF3, an important regulator of the Wnt signaling pathway. Probably also acts as a ligand for frizzled and LRP receptors. During embryonic development, plays a crucial role in limb specification, amplifying the Wnt signaling pathway independently of LGR4-6 receptors, possibly by acting as a direct antagonistic ligand to RNF43 and ZNRF3, hence governing the number of limbs an embryo should form. This Mus musculus (Mouse) protein is R-spondin-2 (Rspo2).